Reading from the N-terminus, the 547-residue chain is Probable bifunctional tRNA threonylcarbamoyladenosine biosynthesis protein (547 aa).

Residues 1–329 are kae1; sequence MKKTFILGIE…FRTDDVKVTW (329 aa). His-113, His-117, and Tyr-134 together coordinate Fe cation. L-threonylcarbamoyladenylate is bound by residues 134-138, Asp-166, Gly-179, Glu-183, and Asn-262; that span reads YVSGA. Asp-290 provides a ligand contact to Fe cation. The region spanning 340 to 547 is the Protein kinase domain; it reads EISPETFFRM…EEIKKRARYA (208 aa). ATP-binding positions include 355–363 and Lys-377; that span reads LDNGAEAVV. Residue Asp-464 is the Proton acceptor; for kinase activity of the active site.

The protein in the N-terminal section; belongs to the KAE1 / TsaD family. In the C-terminal section; belongs to the protein kinase superfamily. Tyr protein kinase family. BUD32 subfamily. Component of the KEOPS complex that consists of Kae1, Bud32, Cgi121 and Pcc1; the whole complex dimerizes. The cofactor is Fe(2+).

Its subcellular location is the cytoplasm. The catalysed reaction is L-seryl-[protein] + ATP = O-phospho-L-seryl-[protein] + ADP + H(+). It catalyses the reaction L-threonyl-[protein] + ATP = O-phospho-L-threonyl-[protein] + ADP + H(+). The enzyme catalyses L-threonylcarbamoyladenylate + adenosine(37) in tRNA = N(6)-L-threonylcarbamoyladenosine(37) in tRNA + AMP + H(+). In terms of biological role, required for the formation of a threonylcarbamoyl group on adenosine at position 37 (t(6)A37) in tRNAs that read codons beginning with adenine. Is a component of the KEOPS complex that is probably involved in the transfer of the threonylcarbamoyl moiety of threonylcarbamoyl-AMP (TC-AMP) to the N6 group of A37. The Kae1 domain likely plays a direct catalytic role in this reaction. The Bud32 domain probably displays kinase activity that regulates Kae1 function. This is Probable bifunctional tRNA threonylcarbamoyladenosine biosynthesis protein from Methanosarcina mazei (strain ATCC BAA-159 / DSM 3647 / Goe1 / Go1 / JCM 11833 / OCM 88) (Methanosarcina frisia).